A 296-amino-acid polypeptide reads, in one-letter code: MESDGGLSRYQKLEKLGEGTYGKVYKAKEKATGRMVALKKIRLEDDGVPSTALREISLLKEVPHPNVVSLFDVLHCQNRLYLVFEYLDQDLKKYMDSVPALCPQLIKSYLYQLLKGLAYSHGHRILHRDLKPQNLLIDRQGALKLADFGLARAVSIPVRVYTHEIVTLWYRAPEVLLGSKSYSVPVDMWSVGCIFGEMLNKKPLFSGDCEIDQIFRIFRVLGTPDDSIWPGVTKLPEYVSTFPNWPGQPYNKIFPRCEPLALDLIAKMLQYEPSKRISAKEALLHPYFGDLDTSFF.

Positions 10-288 (YQKLEKLGEG…AKEALLHPYF (279 aa)) constitute a Protein kinase domain. Residues 16-24 (LGEGTYGKV) and lysine 39 contribute to the ATP site. Threonine 20 carries the phosphothreonine modification. Phosphotyrosine is present on tyrosine 21. Aspartate 129 acts as the Proton acceptor in catalysis. A Phosphothreonine; by CAK modification is found at threonine 162.

It belongs to the protein kinase superfamily. CMGC Ser/Thr protein kinase family. CDC2/CDKX subfamily. Forms a stable but non-covalent complex with a regulatory subunit and with a cyclin.

It catalyses the reaction L-seryl-[protein] + ATP = O-phospho-L-seryl-[protein] + ADP + H(+). The catalysed reaction is L-threonyl-[protein] + ATP = O-phospho-L-threonyl-[protein] + ADP + H(+). The enzyme catalyses [DNA-directed RNA polymerase] + ATP = phospho-[DNA-directed RNA polymerase] + ADP + H(+). Its activity is regulated as follows. Phosphorylation at Thr-20 or Tyr-21 inactivates the enzyme, while phosphorylation at Thr-162 activates it. Its function is as follows. Plays a key role in the control of the eukaryotic cell cycle. Required for entry into S-phase and mitosis. p34 is a component of the kinase complex that phosphorylates the repetitive C-terminus of RNA polymerase II. This Dictyostelium discoideum (Social amoeba) protein is Cyclin-dependent kinase 1 (cdk1).